Here is a 196-residue protein sequence, read N- to C-terminus: uncharacterized protein (196 aa).

A helical transmembrane segment spans residues 22–42 (MIIIPMALLVFILIIGSFFAI).

The protein localises to the cell membrane. This is an uncharacterized protein from Lactobacillus acidophilus (strain ATCC 700396 / NCK56 / N2 / NCFM).